The following is a 254-amino-acid chain: tRNA (guanine-N(1)-)-methyltransferase (254 aa).

S-adenosyl-L-methionine is bound by residues Gly-114 and Ile-134–Leu-139.

The protein belongs to the RNA methyltransferase TrmD family. In terms of assembly, homodimer.

The protein resides in the cytoplasm. It catalyses the reaction guanosine(37) in tRNA + S-adenosyl-L-methionine = N(1)-methylguanosine(37) in tRNA + S-adenosyl-L-homocysteine + H(+). Functionally, specifically methylates guanosine-37 in various tRNAs. The chain is tRNA (guanine-N(1)-)-methyltransferase from Desulforamulus reducens (strain ATCC BAA-1160 / DSM 100696 / MI-1) (Desulfotomaculum reducens).